The following is a 246-amino-acid chain: Small ribosomal subunit protein uS2 (246 aa).

The interval 224-246 (AKQGEESAETEAKEAETTETTTA) is disordered. Over residues 225–239 (KQGEESAETEAKEAE) the composition is skewed to basic and acidic residues.

It belongs to the universal ribosomal protein uS2 family.

The polypeptide is Small ribosomal subunit protein uS2 (Bacillus licheniformis (strain ATCC 14580 / DSM 13 / JCM 2505 / CCUG 7422 / NBRC 12200 / NCIMB 9375 / NCTC 10341 / NRRL NRS-1264 / Gibson 46)).